The primary structure comprises 341 residues: Protein MENT (341 aa).

An N-terminal signal peptide occupies residues 1 to 23 (MVPAAGALLWVLLLNLGPRAAGA). The segment at 115–196 (AGKDSTSREL…SPSPTAMPSP (82 aa)) is disordered. Positions 127–155 (ATPNTAGSSSTRFIANSQEPEIRLTSSLP) are enriched in polar residues.

Post-translationally, phosphorylation sites are present in the extracellular medium. As to expression, plasma. Overexpressed in lymphomas.

It is found in the secreted. In terms of biological role, involved in control of cellular proliferation. Onconcogenic modifier contributing to the tumor suppressor function of DNMT3B. The polypeptide is Protein MENT (MENT) (Homo sapiens (Human)).